A 672-amino-acid chain; its full sequence is UvrABC system protein B (672 aa).

A Helicase ATP-binding domain is found at Glu-26–Arg-183. Gly-39–Thr-46 serves as a coordination point for ATP. The short motif at Tyr-92–Val-115 is the Beta-hairpin element. Residues Gln-431–Leu-597 form the Helicase C-terminal domain. Positions Asp-601–Tyr-623 are disordered. In terms of domain architecture, UVR spans Glu-632–Gln-667.

The protein belongs to the UvrB family. Forms a heterotetramer with UvrA during the search for lesions. Interacts with UvrC in an incision complex.

Its subcellular location is the cytoplasm. Functionally, the UvrABC repair system catalyzes the recognition and processing of DNA lesions. A damage recognition complex composed of 2 UvrA and 2 UvrB subunits scans DNA for abnormalities. Upon binding of the UvrA(2)B(2) complex to a putative damaged site, the DNA wraps around one UvrB monomer. DNA wrap is dependent on ATP binding by UvrB and probably causes local melting of the DNA helix, facilitating insertion of UvrB beta-hairpin between the DNA strands. Then UvrB probes one DNA strand for the presence of a lesion. If a lesion is found the UvrA subunits dissociate and the UvrB-DNA preincision complex is formed. This complex is subsequently bound by UvrC and the second UvrB is released. If no lesion is found, the DNA wraps around the other UvrB subunit that will check the other stand for damage. This chain is UvrABC system protein B, found in Edwardsiella ictaluri (strain 93-146).